The following is a 417-amino-acid chain: Serine hydroxymethyltransferase (417 aa).

N6-acetyllysine is present on K54. Residues L121 and 125–127 each bind (6S)-5,6,7,8-tetrahydrofolate; that span reads GHL. Position 229 is an N6-(pyridoxal phosphate)lysine (K229). 3 positions are modified to N6-acetyllysine: K250, K285, and K354. 355–357 provides a ligand contact to (6S)-5,6,7,8-tetrahydrofolate; sequence SPF. K375 carries the post-translational modification N6-acetyllysine.

The protein belongs to the SHMT family. Homodimer. The cofactor is pyridoxal 5'-phosphate.

The protein localises to the cytoplasm. The catalysed reaction is (6R)-5,10-methylene-5,6,7,8-tetrahydrofolate + glycine + H2O = (6S)-5,6,7,8-tetrahydrofolate + L-serine. It participates in one-carbon metabolism; tetrahydrofolate interconversion. The protein operates within amino-acid biosynthesis; glycine biosynthesis; glycine from L-serine: step 1/1. Catalyzes the reversible interconversion of serine and glycine with tetrahydrofolate (THF) serving as the one-carbon carrier. This reaction serves as the major source of one-carbon groups required for the biosynthesis of purines, thymidylate, methionine, and other important biomolecules. Also exhibits THF-independent aldolase activity toward beta-hydroxyamino acids, producing glycine and aldehydes, via a retro-aldol mechanism. This chain is Serine hydroxymethyltransferase, found in Shigella dysenteriae serotype 1 (strain Sd197).